The primary structure comprises 782 residues: Shutoff protein (782 aa).

Residues 262–329 are binding to host EIF4G; that stretch reads VMNQLLIKRA…AVLVTVELEC (68 aa). The RRM domain maps to 332–450; it reads RFFSDITTLR…SLWTGFDERT (119 aa). A phosphotyrosine; by host mark is found at Tyr349 and Tyr665. Residues 715 to 760 form a disordered region; that stretch reads GGRILGESGRGRGRGLGRMGGGGGGQPRRGSRGGGGRFQGRSDRRQ. Positions 728–752 are enriched in gly residues; that stretch reads RGLGRMGGGGGGQPRRGSRGGGGRF.

Belongs to the adenoviridae shutoff protein family. In terms of assembly, monomer. Interacts with hexon protein; this interaction allows chaperoning and trimerization of hexon proteins. Interacts (via N-terminus) with host initiation factor EIF4G (via C-terminus). Interacts (via RRM domain) with viral mRNAs that contain the tripartite leader; this interaction allows ribosome shunting and expression of viral late mRNAs. Might be cleaved by the viral protease. In terms of processing, phosphorylated. Tyrosine phosphorylation enhances preferential binding to tripartite leader mRNAs and allows ribosome shunting. Post-translationally, methylated. Asymmetric dimethylation by host PRMT1 of the Arg/Gly-rich region may regulate shutoff protein binding to hexon and promote the capsid assembly in the nucleus.

The protein localises to the host cytoplasm. In terms of biological role, protein that inhibits host translation while promoting late viral translation by ribosome shunting. Blocks host cap-dependent translation by binding to eIF4G, displacing MKNK1 from cap initiation complexes and preventing EIF4E phosphorylation. Binds to the tripartite leader sequence of viral late mRNAs and recruits host eIF4G, PABPC1/poly-A binding protein and 40S ribosomes subunits on viral mRNAs, allowing ribosome shunting and efficient translation of late viral mRNAs even though conventional translation via ribosome scanning from the cap has been shut off in the host cell. During assembly, acts as a chaperone protein that helps hexon proteins assembly into trimers. This chain is Shutoff protein, found in Human adenovirus A serotype 12 (HAdV-12).